Consider the following 381-residue polypeptide: Putative F-box/kelch-repeat protein At3g17570 (381 aa).

The 45-residue stretch at 1–45 folds into the F-box domain; the sequence is MFTDLPRDLETEILSRVPATSLQKLKPTCKRWYTLFKDPEFLKKH. Kelch repeat units follow at residues 151-199, 229-281, and 331-379; these read SYKI…TLKG, LLYQ…KIVE, and RFYI…GGKR.

The sequence is that of Putative F-box/kelch-repeat protein At3g17570 from Arabidopsis thaliana (Mouse-ear cress).